Consider the following 535-residue polypeptide: Bifunctional purine biosynthesis protein PurH (535 aa).

An MGS-like domain is found at 6–151 (TRLPVRRALI…KNHKDVAIVV (146 aa)).

The protein belongs to the PurH family.

It carries out the reaction (6R)-10-formyltetrahydrofolate + 5-amino-1-(5-phospho-beta-D-ribosyl)imidazole-4-carboxamide = 5-formamido-1-(5-phospho-D-ribosyl)imidazole-4-carboxamide + (6S)-5,6,7,8-tetrahydrofolate. It catalyses the reaction IMP + H2O = 5-formamido-1-(5-phospho-D-ribosyl)imidazole-4-carboxamide. The protein operates within purine metabolism; IMP biosynthesis via de novo pathway; 5-formamido-1-(5-phospho-D-ribosyl)imidazole-4-carboxamide from 5-amino-1-(5-phospho-D-ribosyl)imidazole-4-carboxamide (10-formyl THF route): step 1/1. It participates in purine metabolism; IMP biosynthesis via de novo pathway; IMP from 5-formamido-1-(5-phospho-D-ribosyl)imidazole-4-carboxamide: step 1/1. This chain is Bifunctional purine biosynthesis protein PurH, found in Pseudomonas putida (strain ATCC 700007 / DSM 6899 / JCM 31910 / BCRC 17059 / LMG 24140 / F1).